Here is a 427-residue protein sequence, read N- to C-terminus: UDP-N-acetylglucosamine 1-carboxyvinyltransferase 1 (427 aa).

Phosphoenolpyruvate is bound at residue 24 to 25; it reads KN. Arg-97 is a UDP-N-acetyl-alpha-D-glucosamine binding site. Cys-121 serves as the catalytic Proton donor. Cys-121 is modified (2-(S-cysteinyl)pyruvic acid O-phosphothioketal). Residues 126–130, Asp-309, and Val-331 each bind UDP-N-acetyl-alpha-D-glucosamine; that span reads RPIDL.

The protein belongs to the EPSP synthase family. MurA subfamily.

Its subcellular location is the cytoplasm. The catalysed reaction is phosphoenolpyruvate + UDP-N-acetyl-alpha-D-glucosamine = UDP-N-acetyl-3-O-(1-carboxyvinyl)-alpha-D-glucosamine + phosphate. Its pathway is cell wall biogenesis; peptidoglycan biosynthesis. Cell wall formation. Adds enolpyruvyl to UDP-N-acetylglucosamine. In Lactococcus lactis subsp. lactis (strain IL1403) (Streptococcus lactis), this protein is UDP-N-acetylglucosamine 1-carboxyvinyltransferase 1.